The primary structure comprises 224 residues: Biosynthetic peptidoglycan transglycosylase (224 aa).

A helical membrane pass occupies residues 12-32 (ILVVLAILPVFLLLVYSLPFV).

Belongs to the glycosyltransferase 51 family.

It localises to the cell inner membrane. It carries out the reaction [GlcNAc-(1-&gt;4)-Mur2Ac(oyl-L-Ala-gamma-D-Glu-L-Lys-D-Ala-D-Ala)](n)-di-trans,octa-cis-undecaprenyl diphosphate + beta-D-GlcNAc-(1-&gt;4)-Mur2Ac(oyl-L-Ala-gamma-D-Glu-L-Lys-D-Ala-D-Ala)-di-trans,octa-cis-undecaprenyl diphosphate = [GlcNAc-(1-&gt;4)-Mur2Ac(oyl-L-Ala-gamma-D-Glu-L-Lys-D-Ala-D-Ala)](n+1)-di-trans,octa-cis-undecaprenyl diphosphate + di-trans,octa-cis-undecaprenyl diphosphate + H(+). The protein operates within cell wall biogenesis; peptidoglycan biosynthesis. In terms of biological role, peptidoglycan polymerase that catalyzes glycan chain elongation from lipid-linked precursors. This chain is Biosynthetic peptidoglycan transglycosylase, found in Brucella suis biovar 1 (strain 1330).